A 162-amino-acid chain; its full sequence is V-type proton ATPase subunit c' (162 aa).

Over 1 to 11 the chain is Lumenal; sequence MSSNLCPIYSS. A helical transmembrane segment spans residues 12–32; it reads FFGFAGVCASMVFSCLGAGYG. Over 33–54 the chain is Cytoplasmic; it reads TALAGRGIAAVGAFRPEIVMKS. A helical membrane pass occupies residues 55-75; that stretch reads LIPVVMSGIIGVYGLVMSVLI. Topologically, residues 76–93 are lumenal; it reads AGDMSPDNDYSLFSGFIH. The chain crosses the membrane as a helical span at residues 94-114; that stretch reads LSAGLAVGLTGVAAGYAIGVV. At 115 to 132 the chain is on the cytoplasmic side; the sequence is GDRGVQSFMRQDRIFVSM. A helical transmembrane segment spans residues 133 to 153; sequence VLILIFAEVLGLYGLIVGLIL. At 154 to 162 the chain is on the lumenal side; it reads QTKTSNVCY.

It belongs to the V-ATPase proteolipid subunit family. In terms of assembly, V-ATPase is a heteromultimeric enzyme composed of a peripheral catalytic V1 complex (components A to H) attached to an integral membrane V0 proton pore complex (components: a, c, c', c'', d, e, f and VOA1). The decameric c-ring forms the proton-conducting pore, and is composed of eight proteolipid subunits c, one subunit c' and one subunit c''.

It is found in the vacuole membrane. In terms of biological role, proton-conducting pore forming subunit of the V0 complex of vacuolar(H+)-ATPase (V-ATPase), a multisubunit enzyme composed of a peripheral complex (V1) that hydrolyzes ATP and a membrane integral complex (V0) that translocates protons. V-ATPase is responsible for acidifying and maintaining the pH of intracellular compartments. The protein is V-type proton ATPase subunit c' of Schizosaccharomyces pombe (strain 972 / ATCC 24843) (Fission yeast).